The primary structure comprises 419 residues: Pregnancy-specific beta-1-glycoprotein 1 (419 aa).

An N-terminal signal peptide occupies residues 1–34 (MGTLSAPPCTQRIKWKGLLLTASLLNFWNLPTTA). The 110-residue stretch at 35–144 (QVTIEAEPTK…TGRFTFTLHL (110 aa)) folds into the Ig-like V-type domain. N-linked (GlcNAc...) asparagine glycosylation is found at Asn-61, Asn-104, Asn-111, Asn-199, Asn-259, Asn-268, and Asn-303. Ig-like C2-type domains lie at 149–234 (PSIS…VTLN), 240–327 (PKPY…VTLN), and 335–410 (PRIY…KSMT). A disulfide bridge links Cys-169 with Cys-217. 2 disulfide bridges follow: Cys-262-Cys-310 and Cys-354-Cys-394.

Belongs to the immunoglobulin superfamily. CEA family.

The protein localises to the secreted. This Homo sapiens (Human) protein is Pregnancy-specific beta-1-glycoprotein 1 (PSG1).